A 206-amino-acid polypeptide reads, in one-letter code: MQEGDYEKAAEAFTKAIEENKEDAIPYINFANLLSSVNELERALAFYDKALELDSSAATAYYGAGNVYVVKEMYKEAKDMFEKALRAGMENGDLFYMLGTVLVKLEQPKLALPYLQRAVELNENDTEARFQFGMCLANEGMLDEALSQFAAVTEQDPGHADAFYNAGVTYAYKENREKALEMLDKAIDIQPDHMLALHAKKLIDPS.

TPR repeat units lie at residues 1-23 (MQEG…NKED), 24-57 (AIPY…DSSA), 59-91 (TAYY…GMEN), 93-125 (DLFY…NEND), 127-159 (EARF…DPGH), and 160-193 (ADAF…QPDH).

Monomer.

Its function is as follows. Could be an interacting mediator in the complex formation among RNA sulfuration components, RNA processing components, and aminoacyl-tRNA synthetases. In Bacillus subtilis (strain 168), this protein is TPR repeat-containing protein YrrB (yrrB).